The primary structure comprises 118 residues: Small ribosomal subunit protein uS13 (118 aa).

The disordered stretch occupies residues 94 to 118 (SLPLRGQRTKTNARTRKGPRKPIRK).

Belongs to the universal ribosomal protein uS13 family. Part of the 30S ribosomal subunit. Forms a loose heterodimer with protein S19. Forms two bridges to the 50S subunit in the 70S ribosome.

In terms of biological role, located at the top of the head of the 30S subunit, it contacts several helices of the 16S rRNA. In the 70S ribosome it contacts the 23S rRNA (bridge B1a) and protein L5 of the 50S subunit (bridge B1b), connecting the 2 subunits; these bridges are implicated in subunit movement. Contacts the tRNAs in the A and P-sites. The protein is Small ribosomal subunit protein uS13 of Shewanella sp. (strain W3-18-1).